A 132-amino-acid chain; its full sequence is Small ribosomal subunit protein uS8 (132 aa).

It belongs to the universal ribosomal protein uS8 family. As to quaternary structure, part of the 30S ribosomal subunit. Contacts proteins S5 and S12.

Its function is as follows. One of the primary rRNA binding proteins, it binds directly to 16S rRNA central domain where it helps coordinate assembly of the platform of the 30S subunit. This Azorhizobium caulinodans (strain ATCC 43989 / DSM 5975 / JCM 20966 / LMG 6465 / NBRC 14845 / NCIMB 13405 / ORS 571) protein is Small ribosomal subunit protein uS8.